The chain runs to 255 residues: Probable transcriptional regulatory protein PCC7424_2775 (255 aa).

The protein belongs to the TACO1 family.

It localises to the cytoplasm. The protein is Probable transcriptional regulatory protein PCC7424_2775 of Gloeothece citriformis (strain PCC 7424) (Cyanothece sp. (strain PCC 7424)).